The primary structure comprises 261 residues: UPF0177 protein YvdC (261 aa).

6 helical membrane passes run 15–35 (WVIV…IFHL), 43–63 (VLSI…VLFI), 84–104 (LDTV…YLIA), 123–143 (IIIG…FAQI), 197–217 (YFAF…TDLY), and 239–259 (FYLN…IALV).

It belongs to the UPF0177 family.

The protein localises to the cell membrane. The chain is UPF0177 protein YvdC (yvdC) from Lactococcus lactis subsp. lactis (strain IL1403) (Streptococcus lactis).